A 178-amino-acid polypeptide reads, in one-letter code: N-alpha-acetyltransferase 80 (178 aa).

One can recognise an N-acetyltransferase domain in the interval 26–178 (VPIHNYPELM…AKKKYMKKVL (153 aa)). Residues R48, 53-56 (RMRS), N88, and S98 each bind substrate. Acetyl-CoA-binding positions include 99-101 (VVV) and 107-112 (GQGFGK). S134 is a substrate binding site. An acetyl-CoA-binding site is contributed by Q138.

It belongs to the acetyltransferase family.

It catalyses the reaction N-terminal L-aspartyl-L-aspartyl-L-aspartyl-[protein] + acetyl-CoA = N-terminal N-acetyl-L-aspartyl-L-aspartyl-L-aspartyl-[protein] + CoA + H(+). The catalysed reaction is N-terminal L-glutamyl-L-glutamyl-L-glutamyl-[protein] + acetyl-CoA = N-terminal N-acetyl-L-glutamyl-L-glutamyl-L-glutamyl-[protein] + CoA + H(+). In terms of biological role, N-alpha-acetyltransferase that acetylates the amino terminal acidic residue of proteins devoid of initiator methionine. Preferentially acts on proteins starting with Asp-Asp-Asp and Glu-Glu-Glu sequences. In vitro, shows high activity towards N-terminal sequences starting with Met-Asp-Glu-Leu, Met-Glu-Glu-Glu and Met-Asp-Asp-Asp. This Drosophila melanogaster (Fruit fly) protein is N-alpha-acetyltransferase 80.